Consider the following 612-residue polypeptide: Anaerobic magnesium-protoporphyrin IX monomethyl ester cyclase (612 aa).

Positions 9-143 constitute a B12-binding domain; that stretch reads NYHSGGAEIA…KAYEADNFAE (135 aa). The Radical SAM core domain occupies 190-417; it reads PLGVRVAIPN…MKPKALTRGE (228 aa). The [4Fe-4S] cluster site is built by Cys-204, Cys-208, and Cys-211.

The protein belongs to the BchE family. It depends on [4Fe-4S] cluster as a cofactor. The cofactor is adenosylcob(III)alamin.

The catalysed reaction is Mg-protoporphyrin IX 13-monomethyl ester + 3 S-adenosyl-L-methionine + H2O = 3,8-divinyl protochlorophyllide a + 3 5'-deoxyadenosine + 3 L-methionine + 4 H(+). It functions in the pathway porphyrin-containing compound metabolism; bacteriochlorophyll biosynthesis (light-independent). Involved in the tetrapyrrole biosynthetic pathways leading to chlorophyll and bacteriochlorophyll (BChl). Catalyzes the anaerobic formation of the isocyclic ring (E-ring) in Mg-protoporphyrin monomethyl ester (MPE) to yield protochlorophyllide a (PChlide a) via a six-electron oxidation and the formation of an oxo group at position C13 using oxygen from a water molecule. The chain is Anaerobic magnesium-protoporphyrin IX monomethyl ester cyclase from Cereibacter sphaeroides (strain ATCC 17023 / DSM 158 / JCM 6121 / CCUG 31486 / LMG 2827 / NBRC 12203 / NCIMB 8253 / ATH 2.4.1.) (Rhodobacter sphaeroides).